We begin with the raw amino-acid sequence, 296 residues long: 3-methyl-2-oxobutanoate hydroxymethyltransferase (296 aa).

Positions 1–33 (MDASDTPTHPAPHPADPAATPYGAPTTPPRPLR) are disordered. Positions 16–25 (DPAATPYGAP) are enriched in low complexity. 2 residues coordinate Mg(2+): Asp77 and Asp116. 3-methyl-2-oxobutanoate is bound by residues 77–78 (DS), Asp116, and Lys146. Residue Glu148 coordinates Mg(2+). Glu214 (proton acceptor) is an active-site residue.

It belongs to the PanB family. In terms of assembly, homodecamer; pentamer of dimers. The cofactor is Mg(2+).

The protein resides in the cytoplasm. It carries out the reaction 3-methyl-2-oxobutanoate + (6R)-5,10-methylene-5,6,7,8-tetrahydrofolate + H2O = 2-dehydropantoate + (6S)-5,6,7,8-tetrahydrofolate. The protein operates within cofactor biosynthesis; (R)-pantothenate biosynthesis; (R)-pantoate from 3-methyl-2-oxobutanoate: step 1/2. Its function is as follows. Catalyzes the reversible reaction in which hydroxymethyl group from 5,10-methylenetetrahydrofolate is transferred onto alpha-ketoisovalerate to form ketopantoate. The polypeptide is 3-methyl-2-oxobutanoate hydroxymethyltransferase (Frankia casuarinae (strain DSM 45818 / CECT 9043 / HFP020203 / CcI3)).